The sequence spans 125 residues: Large ribosomal subunit protein bL12 (125 aa).

The protein belongs to the bacterial ribosomal protein bL12 family. In terms of assembly, homodimer. Part of the ribosomal stalk of the 50S ribosomal subunit. Forms a multimeric L10(L12)X complex, where L10 forms an elongated spine to which 2 to 4 L12 dimers bind in a sequential fashion. Binds GTP-bound translation factors.

Functionally, forms part of the ribosomal stalk which helps the ribosome interact with GTP-bound translation factors. Is thus essential for accurate translation. The sequence is that of Large ribosomal subunit protein bL12 from Cereibacter sphaeroides (Rhodobacter sphaeroides).